A 133-amino-acid polypeptide reads, in one-letter code: Ribonuclease P protein component (133 aa).

It belongs to the RnpA family. Consists of a catalytic RNA component (M1 or rnpB) and a protein subunit.

The enzyme catalyses Endonucleolytic cleavage of RNA, removing 5'-extranucleotides from tRNA precursor.. In terms of biological role, RNaseP catalyzes the removal of the 5'-leader sequence from pre-tRNA to produce the mature 5'-terminus. It can also cleave other RNA substrates such as 4.5S RNA. The protein component plays an auxiliary but essential role in vivo by binding to the 5'-leader sequence and broadening the substrate specificity of the ribozyme. This Corynebacterium efficiens (strain DSM 44549 / YS-314 / AJ 12310 / JCM 11189 / NBRC 100395) protein is Ribonuclease P protein component.